We begin with the raw amino-acid sequence, 645 residues long: Chaperone protein DnaK (645 aa).

Thr-199 carries the phosphothreonine; by autocatalysis modification. Disordered stretches follow at residues 509 to 530 (GALSDSDIEQMQKDAEANAEED) and 615 to 645 (EAGADAAGAAGATAGGGDDDDAIDAEFEVKE). Residues 518-530 (QMQKDAEANAEED) show a composition bias toward basic and acidic residues. The segment covering 615–626 (EAGADAAGAAGA) has biased composition (low complexity). The segment covering 631–645 (GDDDDAIDAEFEVKE) has biased composition (acidic residues).

It belongs to the heat shock protein 70 family.

Its function is as follows. Acts as a chaperone. The chain is Chaperone protein DnaK from Rhodopirellula baltica (strain DSM 10527 / NCIMB 13988 / SH1).